Reading from the N-terminus, the 199-residue chain is Large ribosomal subunit protein bL25 (199 aa).

The protein belongs to the bacterial ribosomal protein bL25 family. CTC subfamily. In terms of assembly, part of the 50S ribosomal subunit; part of the 5S rRNA/L5/L18/L25 subcomplex. Contacts the 5S rRNA. Binds to the 5S rRNA independently of L5 and L18.

Its function is as follows. This is one of the proteins that binds to the 5S RNA in the ribosome where it forms part of the central protuberance. The protein is Large ribosomal subunit protein bL25 of Pelobacter propionicus (strain DSM 2379 / NBRC 103807 / OttBd1).